Reading from the N-terminus, the 444-residue chain is Trigger factor (444 aa).

The 86-residue stretch at 166–251 folds into the PPIase FKBP-type domain; that stretch reads GDQIVIDFKG…VKAVKAPKAA (86 aa).

It belongs to the FKBP-type PPIase family. Tig subfamily.

It is found in the cytoplasm. The enzyme catalyses [protein]-peptidylproline (omega=180) = [protein]-peptidylproline (omega=0). Its function is as follows. Involved in protein export. Acts as a chaperone by maintaining the newly synthesized protein in an open conformation. Functions as a peptidyl-prolyl cis-trans isomerase. The sequence is that of Trigger factor from Paracoccus denitrificans (strain Pd 1222).